The sequence spans 316 residues: Ribosomal RNA small subunit methyltransferase H (316 aa).

Residues 37–39 (GGH), D56, F83, D106, and H113 contribute to the S-adenosyl-L-methionine site. A disordered region spans residues 276–316 (PILPSEEETKENPASRSAKLRVLRKTKSADKKYKKENSKEE). Over residues 302 to 316 (KSADKKYKKENSKEE) the composition is skewed to basic and acidic residues.

It belongs to the methyltransferase superfamily. RsmH family.

It localises to the cytoplasm. The catalysed reaction is cytidine(1402) in 16S rRNA + S-adenosyl-L-methionine = N(4)-methylcytidine(1402) in 16S rRNA + S-adenosyl-L-homocysteine + H(+). Functionally, specifically methylates the N4 position of cytidine in position 1402 (C1402) of 16S rRNA. This Leptospira borgpetersenii serovar Hardjo-bovis (strain JB197) protein is Ribosomal RNA small subunit methyltransferase H.